Consider the following 738-residue polypeptide: Integrin beta-2-like protein (738 aa).

The first 22 residues, 1 to 22 (MLGQCTLLPVLAGLLSLESALS), serve as a signal peptide directing secretion. Residues 23 to 671 (QLCTKDNVST…LVCAEISNTT (649 aa)) lie on the Extracellular side of the membrane. The PSI domain occupies 24-74 (LCTKDNVSTCQDCIRSGPSCAWCQKLNFTGRGEPDSVRCDTPEQLLLKGCT). 23 disulfides stabilise this stretch: Cys25–Cys419, Cys33–Cys43, Cys36–Cys73, Cys46–Cys62, Cys218–Cys258, Cys358–Cys372, Cys421–Cys439, Cys431–Cys442, Cys444–Cys453, Cys455–Cys486, Cys469–Cys484, Cys478–Cys489, Cys491–Cys506, Cys508–Cys531, Cys513–Cys529, Cys521–Cys534, Cys536–Cys545, Cys547–Cys570, Cys554–Cys568, Cys562–Cys573, Cys575–Cys584, Cys594–Cys603, and Cys600–Cys664. A glycan (N-linked (GlcNAc...) asparagine) is linked at Asn29. N-linked (GlcNAc...) asparagine glycosylation is found at Asn50, Asn102, Asn173, Asn226, Asn252, Asn342, Asn360, and Asn386. Residues 126-329 (SVDLYFLMGL…DSSNVAQLIR (204 aa)) enclose the VWFA domain. I-EGF domains follow at residues 421-454 (CQEQSQHHSLCGGKGAMECGICRCNSGYAGKNCE), 455-507 (CQTQ…QYCE), 508-546 (CNNVNCERYDGQVCGGPERGHCSCGRCFCRYGFVGSACQ), and 547-585 (CRMSTSGCLNNRMVECSGHGRCYCNRCLCDPGYQPPLCE). Asn473 carries an N-linked (GlcNAc...) asparagine glycan. Asn627 and Asn669 each carry an N-linked (GlcNAc...) asparagine glycan. A helical membrane pass occupies residues 672 to 692 (ILLGVIVGVLLAVIFLLVYCM). The Cytoplasmic segment spans residues 693-738 (VYLKGTQKAAKLPRKGGAQSTLAQQPHFQEPHHVEPVWNQERQGTQ). The disordered stretch occupies residues 709–738 (GAQSTLAQQPHFQEPHHVEPVWNQERQGTQ). A compositionally biased stretch (polar residues) spans 710-719 (AQSTLAQQPH).

This sequence belongs to the integrin beta chain family. In terms of assembly, monomer and homodimer. Unlike integrin beta chains, no alpha chain partner has yet been found. N-glycosylated. Expressed predominantly in maturing and mature neutrophils.

Its subcellular location is the cell membrane. In terms of biological role, during inflammatory stimulation, plays a role in retaining Cxcl13-expressing cells at the site of the inflammatory response. In Mus musculus (Mouse), this protein is Integrin beta-2-like protein.